Consider the following 490-residue polypeptide: Probable cytosol aminopeptidase (490 aa).

Mn(2+) is bound by residues K257 and D262. Residue K269 is part of the active site. Positions 281, 341, and 343 each coordinate Mn(2+). Residue R345 is part of the active site.

This sequence belongs to the peptidase M17 family. The cofactor is Mn(2+).

Its subcellular location is the cytoplasm. It catalyses the reaction Release of an N-terminal amino acid, Xaa-|-Yaa-, in which Xaa is preferably Leu, but may be other amino acids including Pro although not Arg or Lys, and Yaa may be Pro. Amino acid amides and methyl esters are also readily hydrolyzed, but rates on arylamides are exceedingly low.. The enzyme catalyses Release of an N-terminal amino acid, preferentially leucine, but not glutamic or aspartic acids.. Its function is as follows. Presumably involved in the processing and regular turnover of intracellular proteins. Catalyzes the removal of unsubstituted N-terminal amino acids from various peptides. In Prochlorococcus marinus (strain MIT 9215), this protein is Probable cytosol aminopeptidase.